A 106-amino-acid chain; its full sequence is Large ribosomal subunit protein eL42 (106 aa).

This sequence belongs to the eukaryotic ribosomal protein eL42 family.

The chain is Large ribosomal subunit protein eL42 (RPL44) from Cyberlindnera jadinii (Torula yeast).